The chain runs to 517 residues: Intermediate filament family orphan 2 (517 aa).

An IF rod domain is found at 53 to 484 (NIHLLKGLNV…RLIKGSADRN (432 aa)). Disordered regions lie at residues 104–129 (EQAV…SSGA), 330–349 (KVAS…RFSD), and 478–517 (KGSA…PMVS). Residues 485-497 (SPSPSSVASSDSG) are compositionally biased toward low complexity. Positions 501-517 (EIQDEFEREADVEPMVS) are enriched in acidic residues.

It belongs to the intermediate filament family.

The sequence is that of Intermediate filament family orphan 2 (IFFO2) from Homo sapiens (Human).